Here is a 189-residue protein sequence, read N- to C-terminus: Xanthine phosphoribosyltransferase (189 aa).

Residues Leu-20 and Asn-27 each contribute to the xanthine site. 127–131 contacts 5-phospho-alpha-D-ribose 1-diphosphate; the sequence is AYGNA. A xanthine-binding site is contributed by Lys-155.

It belongs to the purine/pyrimidine phosphoribosyltransferase family. Xpt subfamily. As to quaternary structure, homodimer.

Its subcellular location is the cytoplasm. It carries out the reaction XMP + diphosphate = xanthine + 5-phospho-alpha-D-ribose 1-diphosphate. It functions in the pathway purine metabolism; XMP biosynthesis via salvage pathway; XMP from xanthine: step 1/1. Converts the preformed base xanthine, a product of nucleic acid breakdown, to xanthosine 5'-monophosphate (XMP), so it can be reused for RNA or DNA synthesis. The chain is Xanthine phosphoribosyltransferase from Bacteroides fragilis (strain ATCC 25285 / DSM 2151 / CCUG 4856 / JCM 11019 / LMG 10263 / NCTC 9343 / Onslow / VPI 2553 / EN-2).